Reading from the N-terminus, the 720-residue chain is Polyribonucleotide nucleotidyltransferase (720 aa).

Positions 487 and 493 each coordinate Mg(2+). The 60-residue stretch at 554–613 (PRITTISIPKEKIREVIGTGGKVIREICEQTGAKIDIDDDGTIKVASVDADAAQRAIDWI) folds into the KH domain. Positions 623–691 (GVIYNGKVVK…DRGKVKLSMK (69 aa)) constitute an S1 motif domain. The segment at 695-720 (QTTGEDISAQLEAERAASKRERHHED) is disordered. Positions 706-720 (EAERAASKRERHHED) are enriched in basic and acidic residues.

Belongs to the polyribonucleotide nucleotidyltransferase family. Mg(2+) serves as cofactor.

The protein localises to the cytoplasm. It catalyses the reaction RNA(n+1) + phosphate = RNA(n) + a ribonucleoside 5'-diphosphate. Functionally, involved in mRNA degradation. Catalyzes the phosphorolysis of single-stranded polyribonucleotides processively in the 3'- to 5'-direction. The protein is Polyribonucleotide nucleotidyltransferase of Paramagnetospirillum magneticum (strain ATCC 700264 / AMB-1) (Magnetospirillum magneticum).